A 257-amino-acid polypeptide reads, in one-letter code: Large ribosomal subunit protein bL28m (257 aa).

The N-terminal 55 residues, 1–55, are a transit peptide targeting the mitochondrion; the sequence is MPLHRYPVHLWQKLRLRQGICARLPAHFLRSLEEERTPTPVHYKPHGTKFKINPK.

The protein belongs to the bacterial ribosomal protein bL28 family. As to quaternary structure, component of the mitochondrial ribosome large subunit (39S) which comprises a 16S rRNA and about 50 distinct proteins. Interacts with OXA1L.

The protein localises to the mitochondrion. This Mus musculus (Mouse) protein is Large ribosomal subunit protein bL28m (Mrpl28).